A 367-amino-acid chain; its full sequence is 3-dehydroquinate synthase (367 aa).

Residues 69–74 (DGEAFK), 103–107 (GVVGD), 127–128 (TT), Lys-140, Lys-149, and 167–170 (TLAT) contribute to the NAD(+) site. The Zn(2+) site is built by Glu-182, His-245, and His-262.

It belongs to the sugar phosphate cyclases superfamily. Dehydroquinate synthase family. The cofactor is Co(2+). Zn(2+) serves as cofactor. Requires NAD(+) as cofactor.

The protein localises to the cytoplasm. The catalysed reaction is 7-phospho-2-dehydro-3-deoxy-D-arabino-heptonate = 3-dehydroquinate + phosphate. The protein operates within metabolic intermediate biosynthesis; chorismate biosynthesis; chorismate from D-erythrose 4-phosphate and phosphoenolpyruvate: step 2/7. Its function is as follows. Catalyzes the conversion of 3-deoxy-D-arabino-heptulosonate 7-phosphate (DAHP) to dehydroquinate (DHQ). This chain is 3-dehydroquinate synthase, found in Azotobacter vinelandii (strain DJ / ATCC BAA-1303).